A 324-amino-acid polypeptide reads, in one-letter code: Anthranilate phosphoribosyltransferase (324 aa).

5-phospho-alpha-D-ribose 1-diphosphate contacts are provided by residues Gly75, 78–79 (GD), Thr83, 85–88 (NVST), 102–110 (KHGNFGITG), and Ser114. Gly75 serves as a coordination point for anthranilate. Ser87 contacts Mg(2+). Asn105 contributes to the anthranilate binding site. An anthranilate-binding site is contributed by Arg160. Mg(2+)-binding residues include Asp216 and Glu217.

This sequence belongs to the anthranilate phosphoribosyltransferase family. In terms of assembly, homodimer. The cofactor is Mg(2+).

It carries out the reaction N-(5-phospho-beta-D-ribosyl)anthranilate + diphosphate = 5-phospho-alpha-D-ribose 1-diphosphate + anthranilate. It participates in amino-acid biosynthesis; L-tryptophan biosynthesis; L-tryptophan from chorismate: step 2/5. Its function is as follows. Catalyzes the transfer of the phosphoribosyl group of 5-phosphorylribose-1-pyrophosphate (PRPP) to anthranilate to yield N-(5'-phosphoribosyl)-anthranilate (PRA). In Picrophilus torridus (strain ATCC 700027 / DSM 9790 / JCM 10055 / NBRC 100828 / KAW 2/3), this protein is Anthranilate phosphoribosyltransferase.